Here is a 604-residue protein sequence, read N- to C-terminus: UvrABC system protein C (604 aa).

Residues 13–92 (ASPGVYLMKD…IKKYHPKYNV (80 aa)) form the GIY-YIG domain. In terms of domain architecture, UVR spans 205 to 240 (SEIVQDLEKSIEKASKEQKFEQAGMYYRTLKLIQQA).

It belongs to the UvrC family. Interacts with UvrB in an incision complex.

The protein resides in the cytoplasm. Functionally, the UvrABC repair system catalyzes the recognition and processing of DNA lesions. UvrC both incises the 5' and 3' sides of the lesion. The N-terminal half is responsible for the 3' incision and the C-terminal half is responsible for the 5' incision. The chain is UvrABC system protein C from Chlamydia abortus (strain DSM 27085 / S26/3) (Chlamydophila abortus).